The following is a 103-amino-acid chain: Large ribosomal subunit protein eL42 (103 aa).

Positions 18 and 21 each coordinate Zn(2+). Residues 18-81 (CPKCRTHTEH…TVLKLKCSKC (64 aa)) form a C4-type zinc finger. Positions 40-62 (LSEGERRYARKKKGYGSKRKPEQ) are disordered. The segment covering 47–57 (YARKKKGYGSK) has biased composition (basic residues). The Zn(2+) site is built by C78 and C81.

The protein belongs to the eukaryotic ribosomal protein eL42 family. In terms of assembly, part of the 50S ribosomal subunit. The cofactor is Zn(2+).

In terms of biological role, binds to the 23S rRNA. This is Large ribosomal subunit protein eL42 from Desulfurococcus amylolyticus (strain DSM 18924 / JCM 16383 / VKM B-2413 / 1221n) (Desulfurococcus kamchatkensis).